The primary structure comprises 742 residues: Eukaryotic translation initiation factor 3 subunit B (742 aa).

Over residues 1–10 (MAPSFDTLSE) the composition is skewed to polar residues. Residues 1 to 20 (MAPSFDTLSEQDLHEEEEEE) form a disordered region. Positions 40-126 (TFVVIDGLPI…HTLAVNKLMD (87 aa)) constitute an RRM domain. 5 WD repeats span residues 193 to 230 (AHWT…KLKQ), 232 to 290 (PHPF…RSFV), 304 to 345 (QPKK…LLGK), 515 to 558 (IEKK…EKPE), and 573 to 611 (VEHY…HTFA).

It belongs to the eIF-3 subunit B family. As to quaternary structure, component of the eukaryotic translation initiation factor 3 (eIF-3) complex.

The protein localises to the cytoplasm. Functionally, RNA-binding component of the eukaryotic translation initiation factor 3 (eIF-3) complex, which is involved in protein synthesis of a specialized repertoire of mRNAs and, together with other initiation factors, stimulates binding of mRNA and methionyl-tRNAi to the 40S ribosome. The eIF-3 complex specifically targets and initiates translation of a subset of mRNAs involved in cell proliferation. In Aspergillus terreus (strain NIH 2624 / FGSC A1156), this protein is Eukaryotic translation initiation factor 3 subunit B (prt1).